The chain runs to 439 residues: Serine/threonine-protein kinase 2 (439 aa).

One can recognise a Protein kinase domain in the interval 87–439 (NDDFYHISTG…IFSDWINGRN (353 aa)). Residues 93-101 (ISTGGYGIV) and K117 each bind ATP. Catalysis depends on D307, which acts as the Proton acceptor.

It belongs to the protein kinase superfamily. Ser/Thr protein kinase family. Poxviruses subfamily. Post-translationally, phosphorylated in vivo. Autophosphorylated in vitro.

The protein resides in the host endoplasmic reticulum. The protein localises to the host endoplasmic reticulum-Golgi intermediate compartment. The enzyme catalyses L-seryl-[protein] + ATP = O-phospho-L-seryl-[protein] + ADP + H(+). It catalyses the reaction L-threonyl-[protein] + ATP = O-phospho-L-threonyl-[protein] + ADP + H(+). In terms of biological role, essential serine-protein kinase involved in the early stage of virion morphogenesis. In Homo sapiens (Human), this protein is Serine/threonine-protein kinase 2 (OPG054).